A 235-amino-acid polypeptide reads, in one-letter code: Large ribosomal subunit protein uL1 (235 aa).

Belongs to the universal ribosomal protein uL1 family. In terms of assembly, part of the 50S ribosomal subunit.

Functionally, binds directly to 23S rRNA. The L1 stalk is quite mobile in the ribosome, and is involved in E site tRNA release. Protein L1 is also a translational repressor protein, it controls the translation of the L11 operon by binding to its mRNA. This Mycolicibacterium paratuberculosis (strain ATCC BAA-968 / K-10) (Mycobacterium paratuberculosis) protein is Large ribosomal subunit protein uL1.